A 148-amino-acid chain; its full sequence is Zinc finger X-chromosomal protein (148 aa).

2 C2H2-type zinc fingers span residues 16–38 (IECD…KMVH) and 76–98 (HICV…MRIH).

This sequence belongs to the krueppel C2H2-type zinc-finger protein family. ZFX/ZFY subfamily.

It localises to the nucleus. Functionally, probable transcriptional activator. This Sus scrofa (Pig) protein is Zinc finger X-chromosomal protein (ZFX).